Reading from the N-terminus, the 783-residue chain is Endonuclease MutS2 (783 aa).

Residue 328–335 (GPNTGGKT) coordinates ATP. One can recognise a Smr domain in the interval 708–783 (LDLRGKRYEE…GSGCTIATLG (76 aa)).

This sequence belongs to the DNA mismatch repair MutS family. MutS2 subfamily. As to quaternary structure, homodimer. Binds to stalled ribosomes, contacting rRNA.

Functionally, endonuclease that is involved in the suppression of homologous recombination and thus may have a key role in the control of bacterial genetic diversity. Acts as a ribosome collision sensor, splitting the ribosome into its 2 subunits. Detects stalled/collided 70S ribosomes which it binds and splits by an ATP-hydrolysis driven conformational change. Acts upstream of the ribosome quality control system (RQC), a ribosome-associated complex that mediates the extraction of incompletely synthesized nascent chains from stalled ribosomes and their subsequent degradation. Probably generates substrates for RQC. The polypeptide is Endonuclease MutS2 (Streptococcus thermophilus (strain ATCC BAA-491 / LMD-9)).